The primary structure comprises 126 residues: Large ribosomal subunit protein bL20c (126 aa).

It belongs to the bacterial ribosomal protein bL20 family.

It is found in the plastid. It localises to the chloroplast. Binds directly to 23S ribosomal RNA and is necessary for the in vitro assembly process of the 50S ribosomal subunit. It is not involved in the protein synthesizing functions of that subunit. The chain is Large ribosomal subunit protein bL20c from Illicium oligandrum (Star anise).